We begin with the raw amino-acid sequence, 318 residues long: Aldehyde oxidoreductase FAD-binding subunit PaoB (318 aa).

Residues 1–223 (MKAFTYERVN…VAVTLPPPLG (223 aa)) enclose the FAD-binding PCMH-type domain. FAD contacts are provided by residues 26-34 (KFIAGGTNL) and Thr108. The [4Fe-4S] cluster site is built by Cys119, Cys129, Cys138, and Cys157. FAD is bound by residues Asp164, Ile213, and Lys230.

As to quaternary structure, heterotrimer composed of PaoA, PaoB and PaoC. The cofactor is FAD. [4Fe-4S] cluster serves as cofactor.

It is found in the periplasm. The catalysed reaction is an aldehyde + A + H2O = a carboxylate + AH2 + H(+). Its activity is regulated as follows. The complex requires PaoD for activity. In terms of biological role, oxidizes aldehydes to the corresponding carboxylic acids with a preference for aromatic aldehydes. It might play a role in the detoxification of aldehydes to avoid cell damage. The protein is Aldehyde oxidoreductase FAD-binding subunit PaoB of Escherichia coli (strain K12).